Consider the following 397-residue polypeptide: Putative teichuronic acid biosynthesis glycosyltransferase TuaH (397 aa).

It belongs to the glycosyltransferase group 1 family.

The protein operates within cell wall biogenesis; teichuronic acid biosynthesis. This is Putative teichuronic acid biosynthesis glycosyltransferase TuaH (tuaH) from Bacillus subtilis (strain 168).